The chain runs to 295 residues: Protoheme IX farnesyltransferase (295 aa).

The next 9 membrane-spanning stretches (helical) occupy residues 30-50 (LVVLTGVTGIIIAPGNIHPLI), 51-71 (AVISTLCIALGSGAAGAINMW), 93-115 (ISRSSALEVGLVLSFISVTIMMI), 119-136 (YISGILLAISIGFYIYVY), 148-168 (IVIGGAAGALPPIIGWTSVTG), 175-195 (LVLFLIIFMWTPPHFWALSLL), 219-239 (IHILVYSILLFPITLLPGLFL), 244-264 (LYEITAIPLGLMFVVQAFQVF), and 275-295 (MFTYSIIYLFILFTCIMLSSF).

Belongs to the UbiA prenyltransferase family. Protoheme IX farnesyltransferase subfamily.

The protein localises to the cell inner membrane. It carries out the reaction heme b + (2E,6E)-farnesyl diphosphate + H2O = Fe(II)-heme o + diphosphate. Its pathway is porphyrin-containing compound metabolism; heme O biosynthesis; heme O from protoheme: step 1/1. Converts heme B (protoheme IX) to heme O by substitution of the vinyl group on carbon 2 of heme B porphyrin ring with a hydroxyethyl farnesyl side group. The sequence is that of Protoheme IX farnesyltransferase from Ehrlichia ruminantium (strain Gardel).